The following is a 112-amino-acid chain: Nucleoid-associated protein CPR_0056 (112 aa).

Residues 91-100 are compositionally biased toward basic and acidic residues; sequence ASEETSEKMG. Residues 91–112 form a disordered region; sequence ASEETSEKMGKLTGGMGMPGLF. Positions 102–112 are enriched in gly residues; it reads LTGGMGMPGLF.

It belongs to the YbaB/EbfC family. In terms of assembly, homodimer.

Its subcellular location is the cytoplasm. It localises to the nucleoid. Functionally, binds to DNA and alters its conformation. May be involved in regulation of gene expression, nucleoid organization and DNA protection. The chain is Nucleoid-associated protein CPR_0056 from Clostridium perfringens (strain SM101 / Type A).